Reading from the N-terminus, the 312-residue chain is tRNA dimethylallyltransferase (312 aa).

17 to 24 (GPTASGKS) is a binding site for ATP. 19–24 (TASGKS) lines the substrate pocket.

Belongs to the IPP transferase family. Monomer. The cofactor is Mg(2+).

The catalysed reaction is adenosine(37) in tRNA + dimethylallyl diphosphate = N(6)-dimethylallyladenosine(37) in tRNA + diphosphate. Functionally, catalyzes the transfer of a dimethylallyl group onto the adenine at position 37 in tRNAs that read codons beginning with uridine, leading to the formation of N6-(dimethylallyl)adenosine (i(6)A). The sequence is that of tRNA dimethylallyltransferase from Zymomonas mobilis subsp. mobilis (strain ATCC 31821 / ZM4 / CP4).